We begin with the raw amino-acid sequence, 118 residues long: Evasin P546 (118 aa).

The signal sequence occupies residues 1–21 (MKVLLYIAASCLMLLALNVSA). Intrachain disulfides connect Cys-38-Cys-59, Cys-55-Cys-96, Cys-72-Cys-101, and Cys-91-Cys-110. An N-linked (GlcNAc...) asparagine glycan is attached at Asn-45.

The protein resides in the secreted. Salivary chemokine-binding protein which binds to host chemokines CCL1, CCL3, CCL5 and CCL22. This is Evasin P546 from Amblyomma cajennense (Cayenne tick).